Consider the following 457-residue polypeptide: Siroheme synthase (457 aa).

A precorrin-2 dehydrogenase /sirohydrochlorin ferrochelatase region spans residues 1–204; that stretch reads MDHLPIFCQL…NDQKAITETT (204 aa). Residues 22–23 and 43–44 each bind NAD(+); these read DV and LA. Serine 128 bears the Phosphoserine mark. Positions 216–457 are uroporphyrinogen-III C-methyltransferase; the sequence is GEVVLVGAGP…RDKLNWFSNH (242 aa). S-adenosyl-L-methionine is bound at residue proline 225. The active-site Proton acceptor is aspartate 248. The active-site Proton donor is the lysine 270. S-adenosyl-L-methionine contacts are provided by residues 301 to 303, isoleucine 306, 331 to 332, methionine 382, and glycine 411; these read GGD and TA.

In the N-terminal section; belongs to the precorrin-2 dehydrogenase / sirohydrochlorin ferrochelatase family. It in the C-terminal section; belongs to the precorrin methyltransferase family.

The enzyme catalyses uroporphyrinogen III + 2 S-adenosyl-L-methionine = precorrin-2 + 2 S-adenosyl-L-homocysteine + H(+). It carries out the reaction precorrin-2 + NAD(+) = sirohydrochlorin + NADH + 2 H(+). It catalyses the reaction siroheme + 2 H(+) = sirohydrochlorin + Fe(2+). It participates in cofactor biosynthesis; adenosylcobalamin biosynthesis; precorrin-2 from uroporphyrinogen III: step 1/1. Its pathway is cofactor biosynthesis; adenosylcobalamin biosynthesis; sirohydrochlorin from precorrin-2: step 1/1. The protein operates within porphyrin-containing compound metabolism; siroheme biosynthesis; precorrin-2 from uroporphyrinogen III: step 1/1. It functions in the pathway porphyrin-containing compound metabolism; siroheme biosynthesis; siroheme from sirohydrochlorin: step 1/1. It participates in porphyrin-containing compound metabolism; siroheme biosynthesis; sirohydrochlorin from precorrin-2: step 1/1. Multifunctional enzyme that catalyzes the SAM-dependent methylations of uroporphyrinogen III at position C-2 and C-7 to form precorrin-2 via precorrin-1. Then it catalyzes the NAD-dependent ring dehydrogenation of precorrin-2 to yield sirohydrochlorin. Finally, it catalyzes the ferrochelation of sirohydrochlorin to yield siroheme. The chain is Siroheme synthase from Escherichia fergusonii (strain ATCC 35469 / DSM 13698 / CCUG 18766 / IAM 14443 / JCM 21226 / LMG 7866 / NBRC 102419 / NCTC 12128 / CDC 0568-73).